A 176-amino-acid chain; its full sequence is Peptide deformylase (176 aa).

Fe cation contacts are provided by Cys100 and His142. Glu143 is a catalytic residue. His146 provides a ligand contact to Fe cation.

The protein belongs to the polypeptide deformylase family. It depends on Fe(2+) as a cofactor.

The enzyme catalyses N-terminal N-formyl-L-methionyl-[peptide] + H2O = N-terminal L-methionyl-[peptide] + formate. In terms of biological role, removes the formyl group from the N-terminal Met of newly synthesized proteins. Requires at least a dipeptide for an efficient rate of reaction. N-terminal L-methionine is a prerequisite for activity but the enzyme has broad specificity at other positions. The sequence is that of Peptide deformylase from Elusimicrobium minutum (strain Pei191).